Consider the following 458-residue polypeptide: Cell death abnormality protein 8 (458 aa).

Residues 1-45 are Cytoplasmic-facing; the sequence is MFLKKHKSKLLLVPRDEEQEDAGIVAVLTDRIPSVLLVRWFDLFC. The chain crosses the membrane as a helical span at residues 46–66; it reads FGFAMCSYALDFFSDIGIAIF. Over 67–77 the chain is Extracellular; the sequence is HFWAGRYLSGS. Residues 78 to 98 form a helical membrane-spanning segment; that stretch reads LVLAFALLPSVIINIISMVWM. Residues 99 to 123 lie on the Cytoplasmic side of the membrane; it reads LDDEMHWKRRAHPRRTGTFELNQKR. Residues 124-144 form a helical membrane-spanning segment; the sequence is FIPLSKMIVLCICQMGPLFWY. Topologically, residues 145–219 are extracellular; sequence YKALYYGWMF…YYQTGTYPYW (75 aa). A helical transmembrane segment spans residues 220 to 240; it reads LYFQAASLLLSIISISWSVVV. The Cytoplasmic segment spans residues 241 to 274; sequence QNRSLRMIRDDKVNIWPHEAVLQFCWRFLTILAR. A run of 2 helical transmembrane segments spans residues 275–295 and 296–316; these read IITL…LISV and HLLV…DACT. Position 317 (His317) is a topological domain, extracellular. Residues 318-338 traverse the membrane as a helical segment; sequence IEKLLLLINTFIHIFIPFNMV. Residues 339 to 353 are Cytoplasmic-facing; the sequence is EGNTRWRYLTAYSVE. A helical transmembrane segment spans residues 354–374; it reads FIEMMLVCWLLPLSLNTFPYI. The Extracellular portion of the chain corresponds to 375-378; it reads EKVQ. A helical transmembrane segment spans residues 379 to 399; the sequence is VGVPISFIAGIAIMMMYYQFF. The Cytoplasmic portion of the chain corresponds to 400 to 458; that stretch reads HPNRRQLIVTQSQEDLSLNVQKSVETLTPKLESSLEISGEQNTSQDLVSELLLDVEHEN.

The protein belongs to the XK family. Post-translationally, cleavage by ced-3 activates ced-8 function in promoting phosphatidylserine exposure at the surface of apoptotic cells.

Its subcellular location is the cell membrane. The catalysed reaction is a 1,2-diacyl-sn-glycero-3-phospho-L-serine(in) = a 1,2-diacyl-sn-glycero-3-phospho-L-serine(out). Phospholipid scramblase that acts downstream of ced-9 and caspase ced-3 to promote phosphatidylserine exposure on apoptotic cell surface. Phosphatidylserine is a specific marker only present at the surface of apoptotic cells and acts as a specific signal for engulfment. Regulates apoptosis kinetics during embryonic development. Not required for engulfment of germ cell corpses. The polypeptide is Cell death abnormality protein 8 (Caenorhabditis elegans).